The primary structure comprises 628 residues: MAVLPLLLCLLPLAPASSPPQPASPSPCPRRCRCQTQSLPLSVLCPGAGLLFVPPSLDRRAAELRLADNFIATVRRRDLANMTGLLHLSLSRNTIRHVAAGAFSDLRALRALHLDGNRLTSLGEGQLRGLVNLRHLILSNNQLAALAAGALDDCAETLEDLDLSYNNLEQLPWEALGRLGNVNTLGLDHNLLASVPAGAFSRLHKLARLDMTSNRLTTIPPDPLFSRLPLLARPRGSPASALVLAFGGNPLHCNCELVWLRRLAREDDLEACASPPALGGRYFWAVGEEEFVCEPPVVTHRSPPLAVPAGRPAALRCRAVGDPEPRVRWVSPQGRLLGNSSRARAFPNGTLELLVTEPGDGGIFTCIAANAAGEATAAVELTVGPPPPPQLANSTSCDPPRDGEPDALTPPSAASASASAKAAEAGPPTDRGVQVTEHGATAALIQWPDQRPIPGIRMYQIQYNSSADDILVYRMIPAESSSFLLTDLASGRTYDLCVLAVYEDSATGLTATRPVGCNRFSTEPALRPCGAPHAPFLGGTMIIALGGVIVASVLVFIFVLLMRYKVHGGQPPGKTKASAPVSSVCSQTNGALGPMPAPPAPEPSAPRAHTVVQLDCEPWGPSHEPMGP.

Positions 1-16 are cleaved as a signal peptide; the sequence is MAVLPLLLCLLPLAPA. The Extracellular portion of the chain corresponds to 17 to 540; it reads SSPPQPASPS…APHAPFLGGT (524 aa). An LRRNT domain is found at 19–59; that stretch reads PPQPASPSPCPRRCRCQTQSLPLSVLCPGAGLLFVPPSLDR. 7 LRR repeats span residues 60–83, 84–105, 108–129, 132–153, 157–178, 181–202, and 205–226; these read RAAELRLADNFIATVRRRDLANMT, GLLHLSLSRNTIRHVAAGAFSD, ALRALHLDGNRLTSLGEGQLRG, NLRHLILSNNQLAALAAGALDD, TLEDLDLSYNNLEQLPWEALGR, NVNTLGLDHNLLASVPAGAFSR, and KLARLDMTSNRLTTIPPDPLFS. Positions 249–295 constitute an LRRCT domain; the sequence is NPLHCNCELVWLRRLAREDDLEACASPPALGGRYFWAVGEEEFVCEP. Positions 295–382 constitute an Ig-like domain; the sequence is PPVVTHRSPP…GEATAAVELT (88 aa). A disulfide bond links C317 and C366. 2 N-linked (GlcNAc...) asparagine glycosylation sites follow: N348 and N393. Residues 380 to 433 are disordered; it reads ELTVGPPPPPQLANSTSCDPPRDGEPDALTPPSAASASASAKAAEAGPPTDRGV. Residues 410–428 show a composition bias toward low complexity; that stretch reads PPSAASASASAKAAEAGPP. Residues 427 to 525 enclose the Fibronectin type-III domain; it reads PPTDRGVQVT…GCNRFSTEPA (99 aa). Residues 541-561 traverse the membrane as a helical segment; sequence MIIALGGVIVASVLVFIFVLL. Over 562–628 the chain is Cytoplasmic; sequence MRYKVHGGQP…WGPSHEPMGP (67 aa). A disordered region spans residues 570-609; it reads QPPGKTKASAPVSSVCSQTNGALGPMPAPPAPEPSAPRAH. Over residues 580-590 the composition is skewed to polar residues; sequence PVSSVCSQTNG. Residues 595 to 604 are compositionally biased toward pro residues; it reads MPAPPAPEPS.

This sequence belongs to the LRFN family. In terms of assembly, can form heteromeric complexes with LRFN1, LRFN2, LRFN4 and LRFN5. Able to form homomeric complexes across cell junctions, between adjacent cells. Does not interact with DLG4. N-glycosylated.

The protein localises to the cell membrane. Its subcellular location is the cell projection. It localises to the axon. It is found in the dendrite. The protein resides in the synapse. The protein localises to the presynaptic cell membrane. Its subcellular location is the postsynaptic cell membrane. Cell adhesion molecule that mediates homophilic cell-cell adhesion in a Ca(2+)-independent manner. Promotes neurite outgrowth in hippocampal neurons. This Bos taurus (Bovine) protein is Leucine-rich repeat and fibronectin type-III domain-containing protein 3 (LRFN3).